A 564-amino-acid polypeptide reads, in one-letter code: Protein CPR-5 (564 aa).

The segment at 1-87 (MEALLLPPSP…TSNSNSTKRV (87 aa)) is disordered. Polar residues predominate over residues 12–28 (PQNQITNPANSKPNHQS). The segment covering 29–38 (GDVHKDETMM) has biased composition (basic and acidic residues). Low complexity predominate over residues 69-84 (SSSYCSTSSTSNSNST). 5 consecutive transmembrane segments (helical) span residues 347-367 (IMDWLLVSVFSMLASMVLGVY), 411-431 (VRVWVQIFFGVLMIIVFTYFL), 443-463 (PISFIVLFLGIFCGVSGKLCV), 472-492 (LWLIVWEVFCLLQFVANVFTL), and 526-546 (VYVVILFVLPVINGLLPFATF).

As to quaternary structure, interacts with SIM and SMR1. In terms of tissue distribution, ubiquitous.

Its subcellular location is the membrane. It is found in the nucleus membrane. In terms of biological role, may play a role in transcriptional processes. Negatively regulates the senescence and chlorotic lesions induced by biotic (e.g. pathogens) and abiotic (e.g. sugars, darkness) agents, probably by controlling programmed cell death (pcd). Negative regulator of plant programmed cell death (PCD) and effector-triggered immunity (ETI). Promotes cell division and endoreduplication (e.g. in trichomes). The chain is Protein CPR-5 from Arabidopsis thaliana (Mouse-ear cress).